The sequence spans 372 residues: Protein phosphatase Mn(2+)-dependent 1K (372 aa).

The N-terminal 29 residues, 1–29, are a transit peptide targeting the mitochondrion; the sequence is MLSAAFITLLRSGGNQVKKRVLLSSILLQ. Positions 46-61 are critical for association with the BCKDH complex; sequence RCSRFDPDGSGQPATW. The region spanning 94–346 is the PPM-type phosphatase domain; the sequence is NVGCASLIGK…DNSTAVVVPF (253 aa). 2 residues coordinate Mn(2+): Asp-127 and Gly-128. Phosphoserine is present on Ser-248. Mn(2+) is bound by residues Asp-298 and Asp-337.

Belongs to the PP2C family. As to quaternary structure, monomer. Interacts with E1 and E2 components of the branched-chain alpha-ketoacid dehydrogenase (BCKDH) complex; this interaction requires colocalization in mitochondria. Interacts with BCKDHA but not with BCKDHB of the E1 component. Interacts with the 24-meric E2 core composed of DBT monomers with a 24:1 stoichiometry; the N-terminal region (residues 49-61) of PPM1K and C-terminal linker of the lipoyl domain of DBT (residues 145-160) are critical for this interaction, whereas the lipoyl prosthetic group is dispensable. Competes with BCKDK for binding to the E2 core; this interaction is modulated by branched-chain alpha-keto acids. At steady state, BCKDH holoenzyme preferentially binds BCKDK and BCKDHA is phosphorylated. In response to high levels of branched-chain alpha-keto acids, the inhibitory BCKDK is replaced by activating PPM1K leading to BCKDHA dephosphorylation and BCAA degradation. It depends on Mn(2+) as a cofactor. As to expression, highly expressed in the heart, kidney, brain and liver and to a lesser extent in testis, lung, spleen and adipose tissue. Very low amount in muscle (at protein level). Also expressed in the thymus (at protein level) and the diaphragm. Significantly reduced in hypertrophied hearts.

Its subcellular location is the mitochondrion matrix. It catalyses the reaction O-phospho-L-seryl-[3-methyl-2-oxobutanoate dehydrogenase] + H2O = L-seryl-[3-methyl-2-oxobutanoate dehydrogenase] + phosphate. The enzyme catalyses O-phospho-L-seryl-[protein] + H2O = L-seryl-[protein] + phosphate. It participates in protein modification. Functionally, serine/threonine-protein phosphatase component of macronutrients metabolism. Forms a functional kinase and phosphatase pair with BCKDK, serving as a metabolic regulatory node that coordinates branched-chain amino acids (BCAAs) with glucose and lipid metabolism via two distinct phosphoprotein targets: mitochondrial BCKDHA subunit of the branched-chain alpha-ketoacid dehydrogenase (BCKDH) complex and cytosolic ACLY, a lipogenic enzyme of Krebs cycle. At high levels of branched-chain ketoacids, dephosphorylates and activates mitochondrial BCKDH complex, a multisubunit complex consisting of three multimeric components each involved in different steps of BCAA catabolism: E1 composed of BCKDHA and BCKDHB, E2 core composed of DBT monomers, and E3 composed of DLD monomers. Tightly associates with the E2 component of BCKDH complex and dephosphorylates BCKDHA on Ser-334. Regulates the reversible phosphorylation of ACLY in response to changes in cellular carbohydrate abundance such as occurs during fasting to feeding metabolic transition. At fasting state, appears to dephosphorylate ACLY on Ser-455 and inactivate it. Refeeding stimulates MLXIPL/ChREBP transcription factor, leading to increased BCKDK to PPM1K expression ratio, phosphorylation and activation of ACLY that ultimately results in the generation of malonyl-CoA and oxaloacetate immediate substrates of de novo lipogenesis and gluconeogenesis, respectively. Recognizes phosphosites having SxS or RxxS motifs and strictly depends on Mn(2+) ions for the phosphatase activity. Regulates Ca(2+)-induced opening of mitochondrial transition pore and apoptotic cell death. The chain is Protein phosphatase Mn(2+)-dependent 1K from Mus musculus (Mouse).